We begin with the raw amino-acid sequence, 348 residues long: Phospho-N-acetylmuramoyl-pentapeptide-transferase (348 aa).

The next 10 helical transmembrane spans lie at 11–31 (SWML…IFLG), 68–88 (AGGI…LPLG), 92–112 (TWLF…DDII), 128–148 (FVIQ…IYKG), 165–185 (VGHS…TIVG), 196–216 (LDGL…VVAL), 222–242 (PLAQ…FAFL), 251–271 (VFMG…CAVM), 276–296 (LLLI…ILQV), and 326–346 (VVAR…IAAL).

The protein belongs to the glycosyltransferase 4 family. MraY subfamily. It depends on Mg(2+) as a cofactor.

It localises to the cell inner membrane. The enzyme catalyses UDP-N-acetyl-alpha-D-muramoyl-L-alanyl-gamma-D-glutamyl-meso-2,6-diaminopimeloyl-D-alanyl-D-alanine + di-trans,octa-cis-undecaprenyl phosphate = di-trans,octa-cis-undecaprenyl diphospho-N-acetyl-alpha-D-muramoyl-L-alanyl-D-glutamyl-meso-2,6-diaminopimeloyl-D-alanyl-D-alanine + UMP. The protein operates within cell wall biogenesis; peptidoglycan biosynthesis. Its function is as follows. Catalyzes the initial step of the lipid cycle reactions in the biosynthesis of the cell wall peptidoglycan: transfers peptidoglycan precursor phospho-MurNAc-pentapeptide from UDP-MurNAc-pentapeptide onto the lipid carrier undecaprenyl phosphate, yielding undecaprenyl-pyrophosphoryl-MurNAc-pentapeptide, known as lipid I. This is Phospho-N-acetylmuramoyl-pentapeptide-transferase from Chlamydia caviae (strain ATCC VR-813 / DSM 19441 / 03DC25 / GPIC) (Chlamydophila caviae).